Consider the following 123-residue polypeptide: Small ribosomal subunit protein uS12 (123 aa).

Positions 1-21 are disordered; that stretch reads MPTIEQLVRKGRQAKPKKSKT. Residues 9 to 20 are compositionally biased toward basic residues; sequence RKGRQAKPKKSK. Position 89 is a 3-methylthioaspartic acid (D89).

Belongs to the universal ribosomal protein uS12 family. As to quaternary structure, part of the 30S ribosomal subunit. Contacts proteins S8 and S17. May interact with IF1 in the 30S initiation complex.

Its function is as follows. With S4 and S5 plays an important role in translational accuracy. Functionally, interacts with and stabilizes bases of the 16S rRNA that are involved in tRNA selection in the A site and with the mRNA backbone. Located at the interface of the 30S and 50S subunits, it traverses the body of the 30S subunit contacting proteins on the other side and probably holding the rRNA structure together. The combined cluster of proteins S8, S12 and S17 appears to hold together the shoulder and platform of the 30S subunit. This Bifidobacterium adolescentis (strain ATCC 15703 / DSM 20083 / NCTC 11814 / E194a) protein is Small ribosomal subunit protein uS12.